The chain runs to 289 residues: UPF0276 protein BP2925 (289 aa).

It belongs to the UPF0276 family.

This is UPF0276 protein BP2925 from Bordetella pertussis (strain Tohama I / ATCC BAA-589 / NCTC 13251).